A 430-amino-acid polypeptide reads, in one-letter code: Long-chain specific acyl-CoA dehydrogenase, mitochondrial (430 aa).

Residues 1-30 (MAARLLLRSLRVLSARSATLPPPSARCSHS) constitute a mitochondrion transit peptide. K42 is subject to N6-acetyllysine. Residues S54 and S55 each carry the phosphoserine modification. N6-acetyllysine; alternate occurs at positions 66 and 81. K66 and K81 each carry N6-succinyllysine; alternate. 2 positions are modified to N6-acetyllysine: K92 and K95. K165 carries the N6-succinyllysine modification. 170-179 (IAMTEPGAGS) provides a ligand contact to FAD. S179 lines the substrate pocket. S191 is modified (phosphoserine). 203–205 (FIT) is an FAD binding site. A substrate-binding site is contributed by 227–228 (AH). K240 carries the post-translational modification N6-succinyllysine. N6-acetyllysine; alternate is present on residues K254 and K279. Residues K254 and K279 each carry the N6-succinyllysine; alternate modification. Residues Y282 and 289–292 (PQER) contribute to the substrate site. The active-site Proton acceptor is the E291. Residue R317 coordinates FAD. K318 carries the N6-acetyllysine modification. An N6-acetyllysine; alternate modification is found at K322. At K322 the chain carries N6-succinyllysine; alternate. Q328 is a binding site for FAD. K358 bears the N6-acetyllysine mark. The residue at position 362 (S362) is a Phosphoserine. 385-389 (QLHGG) is an FAD binding site. Residue 412 to 413 (GG) participates in substrate binding. 414–416 (TNE) contributes to the FAD binding site.

The protein belongs to the acyl-CoA dehydrogenase family. As to quaternary structure, homotetramer. Requires FAD as cofactor. Acetylation at Lys-318 and Lys-322 in proximity of the cofactor-binding sites strongly reduces catalytic activity. These sites are deacetylated by SIRT3.

The protein resides in the mitochondrion matrix. It catalyses the reaction a long-chain 2,3-saturated fatty acyl-CoA + oxidized [electron-transfer flavoprotein] + H(+) = a long-chain (2E)-enoyl-CoA + reduced [electron-transfer flavoprotein]. It carries out the reaction octanoyl-CoA + oxidized [electron-transfer flavoprotein] + H(+) = (2E)-octenoyl-CoA + reduced [electron-transfer flavoprotein]. The enzyme catalyses decanoyl-CoA + oxidized [electron-transfer flavoprotein] + H(+) = (2E)-decenoyl-CoA + reduced [electron-transfer flavoprotein]. The catalysed reaction is dodecanoyl-CoA + oxidized [electron-transfer flavoprotein] + H(+) = (2E)-dodecenoyl-CoA + reduced [electron-transfer flavoprotein]. It catalyses the reaction tetradecanoyl-CoA + oxidized [electron-transfer flavoprotein] + H(+) = (2E)-tetradecenoyl-CoA + reduced [electron-transfer flavoprotein]. It carries out the reaction oxidized [electron-transfer flavoprotein] + hexadecanoyl-CoA + H(+) = (2E)-hexadecenoyl-CoA + reduced [electron-transfer flavoprotein]. The enzyme catalyses octadecanoyl-CoA + oxidized [electron-transfer flavoprotein] + H(+) = (2E)-octadecenoyl-CoA + reduced [electron-transfer flavoprotein]. The catalysed reaction is (5E)-tetradecenoyl-CoA + oxidized [electron-transfer flavoprotein] + H(+) = (2E,5E)-tetradecadienoyl-CoA + reduced [electron-transfer flavoprotein]. It catalyses the reaction (5Z)-tetradecenoyl-CoA + oxidized [electron-transfer flavoprotein] + H(+) = (2E,5Z)-tetradecadienoyl-CoA + reduced [electron-transfer flavoprotein]. It carries out the reaction oxidized [electron-transfer flavoprotein] + (9Z)-octadecenoyl-CoA + H(+) = (2E,9Z)-octadecadienoyl-CoA + reduced [electron-transfer flavoprotein]. The enzyme catalyses hexanoyl-CoA + oxidized [electron-transfer flavoprotein] + H(+) = (2E)-hexenoyl-CoA + reduced [electron-transfer flavoprotein]. The catalysed reaction is eicosanoyl-CoA + oxidized [electron-transfer flavoprotein] + H(+) = (2E)-eicosenoyl-CoA + reduced [electron-transfer flavoprotein]. It catalyses the reaction docosanoyl-CoA + oxidized [electron-transfer flavoprotein] + H(+) = (2E)-docosenoyl-CoA + reduced [electron-transfer flavoprotein]. It carries out the reaction tetracosanoyl-CoA + oxidized [electron-transfer flavoprotein] + H(+) = (2E)-tetracosenoyl-CoA + reduced [electron-transfer flavoprotein]. The protein operates within lipid metabolism; mitochondrial fatty acid beta-oxidation. With respect to regulation, inhibited by crotonyl-CoA, 2-octenoyl-CoA and 2-hexadecenoyl-CoA. Its function is as follows. Long-chain specific acyl-CoA dehydrogenase is one of the acyl-CoA dehydrogenases that catalyze the first step of mitochondrial fatty acid beta-oxidation, an aerobic process breaking down fatty acids into acetyl-CoA and allowing the production of energy from fats. The first step of fatty acid beta-oxidation consists in the removal of one hydrogen from C-2 and C-3 of the straight-chain fatty acyl-CoA thioester, resulting in the formation of trans-2-enoyl-CoA. Among the different mitochondrial acyl-CoA dehydrogenases, long-chain specific acyl-CoA dehydrogenase can act on saturated and unsaturated acyl-CoAs with 6 to 24 carbons with a preference for 8 to 18 carbons long primary chains. This Rattus norvegicus (Rat) protein is Long-chain specific acyl-CoA dehydrogenase, mitochondrial.